Consider the following 231-residue polypeptide: NADH-ubiquinone oxidoreductase chain 4 (231 aa).

A run of 6 helical transmembrane segments spans residues P1 to I21, M34 to L54, S61 to I80, G85 to A107, I128 to P148, and T169 to L189.

This sequence belongs to the complex I subunit 4 family.

The protein localises to the mitochondrion membrane. The enzyme catalyses a ubiquinone + NADH + 5 H(+)(in) = a ubiquinol + NAD(+) + 4 H(+)(out). In terms of biological role, core subunit of the mitochondrial membrane respiratory chain NADH dehydrogenase (Complex I) that is believed to belong to the minimal assembly required for catalysis. Complex I functions in the transfer of electrons from NADH to the respiratory chain. The immediate electron acceptor for the enzyme is believed to be ubiquinone. The polypeptide is NADH-ubiquinone oxidoreductase chain 4 (MT-ND4) (Gloydius blomhoffii (Mamushi)).